The sequence spans 438 residues: Ribosome biogenesis protein NOP53 (438 aa).

2 disordered regions span residues 1–23 (MVAGKRTGAAKGSRHNKKYWRKG) and 247–346 (HPKY…RKKE). The segment covering 12–21 (GSRHNKKYWR) has biased composition (basic residues). Basic and acidic residues-rich tracts occupy residues 265 to 288 (KSMKTGGEAEPKSQRVECDRMTKE), 297 to 318 (QKLDKEEKRRLEEKAKEQDSHN), and 325 to 346 (LHKELDEEEKQRHEESEVRKKE).

It belongs to the NOP53 family.

The protein resides in the nucleus. It is found in the nucleolus. It localises to the nucleoplasm. Its function is as follows. May play a role in ribosome biogenesis, being required for integration of the 5S RNP into the ribosomal large subunit. The protein is Ribosome biogenesis protein NOP53 of Caenorhabditis elegans.